Consider the following 226-residue polypeptide: Ribonuclease 3 (226 aa).

Residues 7–129 enclose the RNase III domain; the sequence is LPRLCRTLGY…IIGAIYLDSD (123 aa). Residue glutamate 42 participates in Mg(2+) binding. Aspartate 46 is an active-site residue. Residues aspartate 115 and glutamate 118 each contribute to the Mg(2+) site. Residue glutamate 118 is part of the active site. The region spanning 156–226 is the DRBM domain; sequence DAKTLLQEYL…AAQVLELLKK (71 aa).

The protein belongs to the ribonuclease III family. In terms of assembly, homodimer. Mg(2+) is required as a cofactor.

The protein localises to the cytoplasm. The catalysed reaction is Endonucleolytic cleavage to 5'-phosphomonoester.. In terms of biological role, digests double-stranded RNA. Involved in the processing of primary rRNA transcript to yield the immediate precursors to the large and small rRNAs (23S and 16S). Processes some mRNAs, and tRNAs when they are encoded in the rRNA operon. Processes pre-crRNA and tracrRNA of type II CRISPR loci if present in the organism. The sequence is that of Ribonuclease 3 from Shewanella sp. (strain W3-18-1).